Consider the following 407-residue polypeptide: Chorismate synthase (407 aa).

R40 and R46 together coordinate NADP(+). Residues 135–137 (RAS), 256–257 (QA), G300, 315–319 (KPIST), and R341 each bind FMN.

The protein belongs to the chorismate synthase family. In terms of assembly, homotetramer. FMNH2 serves as cofactor.

The catalysed reaction is 5-O-(1-carboxyvinyl)-3-phosphoshikimate = chorismate + phosphate. It participates in metabolic intermediate biosynthesis; chorismate biosynthesis; chorismate from D-erythrose 4-phosphate and phosphoenolpyruvate: step 7/7. Functionally, catalyzes the anti-1,4-elimination of the C-3 phosphate and the C-6 proR hydrogen from 5-enolpyruvylshikimate-3-phosphate (EPSP) to yield chorismate, which is the branch point compound that serves as the starting substrate for the three terminal pathways of aromatic amino acid biosynthesis. This reaction introduces a second double bond into the aromatic ring system. The chain is Chorismate synthase from Mycobacterium leprae (strain Br4923).